Reading from the N-terminus, the 946-residue chain is Probable leucine-rich repeat receptor-like protein kinase At5g49770 (946 aa).

An N-terminal signal peptide occupies residues Met1–Ala25. Residues Phe26–Lys561 lie on the Extracellular side of the membrane. 14 LRR repeats span residues Asp67–Leu91, Ser92–Leu116, Lys118–Leu140, Glu141–Leu164, Lys166–Gly191, Leu195–Ser219, Met221–Val244, Gln245–Leu268, Thr269–Ser293, Tyr295–Pro314, Leu316–Pro340, Gln342–Lys365, Leu367–Pro387, and Asn389–Gly407. N-linked (GlcNAc...) asparagine glycans are attached at residues Asn246, Asn267, and Asn287. Asn354 and Asn362 each carry an N-linked (GlcNAc...) asparagine glycan. 4 N-linked (GlcNAc...) asparagine glycosylation sites follow: Asn415, Asn460, Asn489, and Asn514. Residues Val562–Ile582 traverse the membrane as a helical segment. At Tyr583–Pro946 the chain is on the cytoplasmic side. Residues Phe634–Leu908 form the Protein kinase domain. ATP contacts are provided by residues Val640–Val648 and Lys662. Catalysis depends on Asp758, which acts as the Proton acceptor. The disordered stretch occupies residues Ser919–Pro946.

It belongs to the protein kinase superfamily. Ser/Thr protein kinase family.

Its subcellular location is the membrane. The catalysed reaction is L-seryl-[protein] + ATP = O-phospho-L-seryl-[protein] + ADP + H(+). The enzyme catalyses L-threonyl-[protein] + ATP = O-phospho-L-threonyl-[protein] + ADP + H(+). In Arabidopsis thaliana (Mouse-ear cress), this protein is Probable leucine-rich repeat receptor-like protein kinase At5g49770.